Consider the following 701-residue polypeptide: Elongation factor G (701 aa).

The 283-residue stretch at E8 to T290 folds into the tr-type G domain. GTP is bound by residues A17–T24, D88–H92, and N142–D145.

The protein belongs to the TRAFAC class translation factor GTPase superfamily. Classic translation factor GTPase family. EF-G/EF-2 subfamily.

Its subcellular location is the cytoplasm. Functionally, catalyzes the GTP-dependent ribosomal translocation step during translation elongation. During this step, the ribosome changes from the pre-translocational (PRE) to the post-translocational (POST) state as the newly formed A-site-bound peptidyl-tRNA and P-site-bound deacylated tRNA move to the P and E sites, respectively. Catalyzes the coordinated movement of the two tRNA molecules, the mRNA and conformational changes in the ribosome. The protein is Elongation factor G of Aeromonas salmonicida (strain A449).